The chain runs to 495 residues: RuBisCO large subunit-binding protein subunit alpha (495 aa).

This sequence belongs to the chaperonin (HSP60) family. In terms of assembly, oligomer of probably six alpha and six beta subunits.

It localises to the plastid. The protein localises to the chloroplast. Functionally, this protein binds RuBisCO small and large subunits and is implicated in the assembly of the enzyme oligomer. The chain is RuBisCO large subunit-binding protein subunit alpha from Ricinus communis (Castor bean).